The primary structure comprises 374 residues: Putative glutamate--cysteine ligase 2 (374 aa).

Belongs to the glutamate--cysteine ligase type 2 family. YbdK subfamily.

The catalysed reaction is L-cysteine + L-glutamate + ATP = gamma-L-glutamyl-L-cysteine + ADP + phosphate + H(+). Its function is as follows. ATP-dependent carboxylate-amine ligase which exhibits weak glutamate--cysteine ligase activity. The chain is Putative glutamate--cysteine ligase 2 from Laribacter hongkongensis (strain HLHK9).